Reading from the N-terminus, the 494-residue chain is Transcription factor SOX-9 (494 aa).

2 disordered regions span residues 1-66 and 159-275; these read MNLL…ESDE and ERLR…FRDV. The span at 27–42 shows a compositional bias: low complexity; sequence SDDSAGSPCPSGSGSD. Composition is skewed to basic and acidic residues over residues 56-66 and 159-174; these read GDPDLKKESDE and ERLR…DYKY. The segment at 63-103 is dimerization (DIM); that stretch reads ESDEDKFPVCIREAVSQVLKGYDWTLVPMPVRVNGSSKNKP. Positions 63-103 are PQA; that stretch reads ESDEDKFPVCIREAVSQVLKGYDWTLVPMPVRVNGSSKNKP. Ser64 is subject to Phosphoserine. Positions 105 to 173 form a DNA-binding region, HMG box; sequence VKRPMNAFMV…QHKKDHPDYK (69 aa). Position 181 is a phosphoserine (Ser181). Residues 211-222 are compositionally biased toward low complexity; the sequence is SPQSSSSISEVH. Positions 224-309 are transactivation domain (TAM); sequence PGEHSGQSQG…LPPNGHPGVP (86 aa). 2 consecutive short sequence motifs (9aaTAD) follow at residues 277 to 286 and 292 to 300; these read IGELSSDVIS and DVNEFDQYL. Over residues 326–337 the composition is skewed to low complexity; the sequence is SSASSPAGAGHA. The segment at 326 to 402 is disordered; the sequence is SSASSPAGAG…PQQQQQQQQQ (77 aa). The segment covering 344-353 has biased composition (pro residues); the sequence is PQPPQPPAQP. Residues 372–494 form a transactivation domain (TAC) region; the sequence is RPHIKTEQLS…QPVYTQLTRP (123 aa). Residue Lys376 forms a Glycyl lysine isopeptide (Lys-Gly) (interchain with G-Cter in SUMO) linkage. The segment covering 378–387 has biased composition (polar residues); sequence EQLSPSHYSE. Positions 388–402 are enriched in low complexity; the sequence is QQQHSPQQQQQQQQQ. The short motif at 445 to 453 is the 9aaTAD 3 element; sequence GGLYSTFTY. Residues 462–494 are disordered; sequence YTPIADTSGVPSIPQTHSPQHWEQPVYTQLTRP. Positions 470-494 are enriched in polar residues; the sequence is GVPSIPQTHSPQHWEQPVYTQLTRP.

In terms of assembly, interacts with SNAI2; triggers neural crest delamination in a phosphorylation dependent manner. Interacts with UBE2I. Post-translationally, phosphorylated at Ser-181 in the developing neural tube. Phosphorylation at either Ser-64 or Ser-181 is required for sumoylation, but phosphorylation is not dependent on sumoylation. Sumoylation is enhanced by PKA. Phosphorylation is required for interaction with SNAI2 to trigger neural crest delamination and for an efficient trunk neural crest delamination, whereas sumoylation plays a less significant role. Phosphorylation and sumoylation are induced by BMP signaling pathway. Sumoylated at Lys-376; phosphorylation at either Ser-64 or Ser-181 is required for sumoylation. Sumoylation is induced by BMP signaling pathway.

The protein localises to the nucleus. Its function is as follows. Transcription factor that plays a key role in chondrocytes differentiation and skeletal development. Specifically binds the 5'-ACAAAG-3' DNA motif present in enhancers and super-enhancers and promotes expression of genes important for chondrogenesis, including COL2A1. Plays a central role in successive steps of chondrocyte differentiation. Absolutely required for precartilaginous condensation, the first step in chondrogenesis during which skeletal progenitors differentiate into prechondrocytes. Together with SOX5 and SOX6, required for overt chondrogenesis when condensed prechondrocytes differentiate into early stage chondrocytes, the second step in chondrogenesis. Later, required to direct hypertrophic maturation and block osteoblast differentiation of growth plate chondrocytes: maintains chondrocyte columnar proliferation, delays prehypertrophy and then prevents osteoblastic differentiation of chondrocytes. Also required for chondrocyte hypertrophy, both indirectly, by keeping the lineage fate of chondrocytes, and directly, by remaining present in upper hypertrophic cells. Low lipid levels are the main nutritional determinant for chondrogenic commitment of skeletal progenitor cells: when lipids levels are low, FOXO transcription factors promote expression of SOX9, which induces chondrogenic commitment and suppresses fatty acid oxidation. In addition to cartilage development, also acts as a regulator of proliferation and differentiation in epithelial stem/progenitor cells. In response to bone morphogenetic protein stimulus, phosphorylation is induced and then sumoylation, allowing cooperation with SNAI2 to trigger neural crest delamination. In Gallus gallus (Chicken), this protein is Transcription factor SOX-9.